A 102-amino-acid chain; its full sequence is Large ribosomal subunit protein uL24 (102 aa).

This sequence belongs to the universal ribosomal protein uL24 family. Part of the 50S ribosomal subunit.

In terms of biological role, one of two assembly initiator proteins, it binds directly to the 5'-end of the 23S rRNA, where it nucleates assembly of the 50S subunit. One of the proteins that surrounds the polypeptide exit tunnel on the outside of the subunit. In Paraburkholderia phytofirmans (strain DSM 17436 / LMG 22146 / PsJN) (Burkholderia phytofirmans), this protein is Large ribosomal subunit protein uL24.